Reading from the N-terminus, the 201-residue chain is FMN-dependent NADH:quinone oxidoreductase (201 aa).

FMN-binding positions include Ser-10, 16-18 (SQS), 96-99 (MYNF), and 140-143 (SRGG).

This sequence belongs to the azoreductase type 1 family. Homodimer. It depends on FMN as a cofactor.

It catalyses the reaction 2 a quinone + NADH + H(+) = 2 a 1,4-benzosemiquinone + NAD(+). The catalysed reaction is N,N-dimethyl-1,4-phenylenediamine + anthranilate + 2 NAD(+) = 2-(4-dimethylaminophenyl)diazenylbenzoate + 2 NADH + 2 H(+). Its function is as follows. Quinone reductase that provides resistance to thiol-specific stress caused by electrophilic quinones. Functionally, also exhibits azoreductase activity. Catalyzes the reductive cleavage of the azo bond in aromatic azo compounds to the corresponding amines. This chain is FMN-dependent NADH:quinone oxidoreductase, found in Escherichia coli O157:H7.